A 609-amino-acid chain; its full sequence is Proline--tRNA ligase (609 aa).

Belongs to the class-II aminoacyl-tRNA synthetase family. ProS type 1 subfamily. Homodimer.

It localises to the cytoplasm. It catalyses the reaction tRNA(Pro) + L-proline + ATP = L-prolyl-tRNA(Pro) + AMP + diphosphate. Catalyzes the attachment of proline to tRNA(Pro) in a two-step reaction: proline is first activated by ATP to form Pro-AMP and then transferred to the acceptor end of tRNA(Pro). As ProRS can inadvertently accommodate and process non-cognate amino acids such as alanine and cysteine, to avoid such errors it has two additional distinct editing activities against alanine. One activity is designated as 'pretransfer' editing and involves the tRNA(Pro)-independent hydrolysis of activated Ala-AMP. The other activity is designated 'posttransfer' editing and involves deacylation of mischarged Ala-tRNA(Pro). The misacylated Cys-tRNA(Pro) is not edited by ProRS. The polypeptide is Proline--tRNA ligase (Synechococcus sp. (strain JA-3-3Ab) (Cyanobacteria bacterium Yellowstone A-Prime)).